A 346-amino-acid chain; its full sequence is [LysW]-lysine/[LysW]-ornithine hydrolase (346 aa).

His67 is a binding site for Zn(2+). Residue Asp69 is part of the active site. Asp91 lines the Zn(2+) pocket. Catalysis depends on Glu121, which acts as the Proton acceptor. Zn(2+) contacts are provided by Glu122, Glu145, and His316.

Belongs to the peptidase M20A family. LysK subfamily. Requires Zn(2+) as cofactor. It depends on Co(2+) as a cofactor.

It localises to the cytoplasm. The enzyme catalyses [amino-group carrier protein]-C-terminal-gamma-(L-lysyl)-L-glutamate + H2O = [amino-group carrier protein]-C-terminal-L-glutamate + L-lysine. The catalysed reaction is [amino-group carrier protein]-C-terminal-gamma-(L-ornithyl)-L-glutamate + H2O = [amino-group carrier protein]-C-terminal-L-glutamate + L-ornithine. It functions in the pathway amino-acid biosynthesis; L-lysine biosynthesis via AAA pathway; L-lysine from L-alpha-aminoadipate (Thermus route): step 5/5. Its pathway is amino-acid biosynthesis; L-arginine biosynthesis. Its function is as follows. Catalyzes the release of L-lysine from [LysW]-gamma-L-lysine and the release of L-ornithine from [LysW]-L-ornithine. The protein is [LysW]-lysine/[LysW]-ornithine hydrolase of Sulfurisphaera tokodaii (strain DSM 16993 / JCM 10545 / NBRC 100140 / 7) (Sulfolobus tokodaii).